The primary structure comprises 455 residues: UDP-N-acetylmuramoylalanine--D-glutamate ligase (455 aa).

112–118 (GTNGKTT) is an ATP binding site.

Belongs to the MurCDEF family.

It is found in the cytoplasm. The catalysed reaction is UDP-N-acetyl-alpha-D-muramoyl-L-alanine + D-glutamate + ATP = UDP-N-acetyl-alpha-D-muramoyl-L-alanyl-D-glutamate + ADP + phosphate + H(+). The protein operates within cell wall biogenesis; peptidoglycan biosynthesis. Its function is as follows. Cell wall formation. Catalyzes the addition of glutamate to the nucleotide precursor UDP-N-acetylmuramoyl-L-alanine (UMA). This Trichormus variabilis (strain ATCC 29413 / PCC 7937) (Anabaena variabilis) protein is UDP-N-acetylmuramoylalanine--D-glutamate ligase.